The sequence spans 396 residues: Tetracycline resistance protein, class C (396 aa).

Residues 1-6 (MKSNNA) lie on the Cytoplasmic side of the membrane. The chain crosses the membrane as a helical span at residues 7–27 (LIVILGTVTLDAVGIGLVMPV). The Periplasmic portion of the chain corresponds to 28–45 (LPGLLRDIVHSDSIASHY). A helical membrane pass occupies residues 46–66 (GVLLALYALMQFLCAPVLGAL). The Cytoplasmic portion of the chain corresponds to 67 to 79 (SDRFGRRPVLLAS). The helical transmembrane segment at 80-100 (LLGATIDYAIMATTPVLWILY) threads the bilayer. Residues 101–103 (AGR) are Periplasmic-facing. Residues 104–124 (IVAGITGATGAVAGAYIADIT) traverse the membrane as a helical segment. At 125 to 138 (DGEDRARHFGLMSA) the chain is on the cytoplasmic side. Residues 139 to 159 (CFGVGMVAGPVAGGLLGAISL) form a helical membrane-spanning segment. His-160 is a topological domain (periplasmic). A helical membrane pass occupies residues 161–181 (APFLAAAVLNGLNLLLGCFLM). Residues 182 to 210 (QESHKGERRPMPLRAFNPVSSFRWARGMT) are Cytoplasmic-facing. A helical membrane pass occupies residues 211–231 (IVAALMTVFFIMQLVGQVPAA). Over 232 to 246 (LWVIFGEDRFRWSAT) the chain is Periplasmic. The chain crosses the membrane as a helical span at residues 247–267 (MIGLSLAVFGILHALAQAFVT). Residues 268–277 (GPATKRFGEK) lie on the Cytoplasmic side of the membrane. The helical transmembrane segment at 278–298 (QAIIAGMAADALGYVLLAFAT) threads the bilayer. Residue Arg-299 is a topological domain, periplasmic. A helical transmembrane segment spans residues 300-320 (GWMAFPIMILLASGGIGMPAL). Over 321–339 (QAMLSRQVDDDHQGQLQGS) the chain is Cytoplasmic. The chain crosses the membrane as a helical span at residues 340-360 (LAALTSLTSITGPLIVTAIYA). Residues 361–364 (ASAS) are Periplasmic-facing. The helical transmembrane segment at 365-385 (TWNGLAWIVGAALYLVCLPAL) threads the bilayer. Residues 386–396 (RRGAWSRATST) lie on the Cytoplasmic side of the membrane.

Belongs to the major facilitator superfamily. TCR/Tet family.

It is found in the cell inner membrane. Its function is as follows. Resistance to tetracycline by an active tetracycline efflux. This is an energy-dependent process that decreases the accumulation of the antibiotic in whole cells. This protein functions as a metal-tetracycline/H(+) antiporter. The polypeptide is Tetracycline resistance protein, class C (tetA) (Escherichia coli).